The primary structure comprises 392 residues: Nicotinate phosphoribosyltransferase (392 aa).

A Phosphohistidine; by autocatalysis modification is found at His214.

The protein belongs to the NAPRTase family. Transiently phosphorylated on a His residue during the reaction cycle. Phosphorylation strongly increases the affinity for substrates and increases the rate of nicotinate D-ribonucleotide production. Dephosphorylation regenerates the low-affinity form of the enzyme, leading to product release.

It carries out the reaction nicotinate + 5-phospho-alpha-D-ribose 1-diphosphate + ATP + H2O = nicotinate beta-D-ribonucleotide + ADP + phosphate + diphosphate. Its pathway is cofactor biosynthesis; NAD(+) biosynthesis; nicotinate D-ribonucleotide from nicotinate: step 1/1. Catalyzes the synthesis of beta-nicotinate D-ribonucleotide from nicotinate and 5-phospho-D-ribose 1-phosphate at the expense of ATP. This Xanthomonas axonopodis pv. citri (strain 306) protein is Nicotinate phosphoribosyltransferase.